A 358-amino-acid chain; its full sequence is Fructose-bisphosphate aldolase 1, cytoplasmic (358 aa).

Arg39 serves as a coordination point for substrate. Glu183 functions as the Proton acceptor in the catalytic mechanism. Lys225 (schiff-base intermediate with dihydroxyacetone-P) is an active-site residue. Substrate-binding positions include 266–268 (SGG) and Arg298.

The protein belongs to the class I fructose-bisphosphate aldolase family. As to quaternary structure, homotetramer. Expressed in callus.

Its subcellular location is the cytoplasm. The protein localises to the cytosol. The enzyme catalyses beta-D-fructose 1,6-bisphosphate = D-glyceraldehyde 3-phosphate + dihydroxyacetone phosphate. Its pathway is carbohydrate degradation; glycolysis; D-glyceraldehyde 3-phosphate and glycerone phosphate from D-glucose: step 4/4. Functionally, fructose-bisphosphate aldolase that plays a key role in glycolysis and gluconeogenesis. Involved in gibberellin-mediated root growth. May be regulated by CDPK13. Associates with vacuolar proton ATPase (V-ATPase) and may regulate the V-ATPase-mediated control of root cell elongation. The sequence is that of Fructose-bisphosphate aldolase 1, cytoplasmic from Oryza sativa subsp. japonica (Rice).